The chain runs to 244 residues: tRNA (guanine-N(7)-)-methyltransferase (244 aa).

The S-adenosyl-L-methionine site is built by E75, E100, D127, and D150. D150 is an active-site residue. Residues K154, D186, and 223–226 each bind substrate; that span reads TRFE.

The protein belongs to the class I-like SAM-binding methyltransferase superfamily. TrmB family.

The enzyme catalyses guanosine(46) in tRNA + S-adenosyl-L-methionine = N(7)-methylguanosine(46) in tRNA + S-adenosyl-L-homocysteine. Its pathway is tRNA modification; N(7)-methylguanine-tRNA biosynthesis. Its function is as follows. Catalyzes the formation of N(7)-methylguanine at position 46 (m7G46) in tRNA. This Xylella fastidiosa (strain M23) protein is tRNA (guanine-N(7)-)-methyltransferase.